Consider the following 397-residue polypeptide: Anhydro-N-acetylmuramic acid kinase (397 aa).

Residue 9-16 (GTSYDAID) participates in ATP binding.

The protein belongs to the anhydro-N-acetylmuramic acid kinase family.

The enzyme catalyses 1,6-anhydro-N-acetyl-beta-muramate + ATP + H2O = N-acetyl-D-muramate 6-phosphate + ADP + H(+). It functions in the pathway amino-sugar metabolism; 1,6-anhydro-N-acetylmuramate degradation. It participates in cell wall biogenesis; peptidoglycan recycling. Catalyzes the specific phosphorylation of 1,6-anhydro-N-acetylmuramic acid (anhMurNAc) with the simultaneous cleavage of the 1,6-anhydro ring, generating MurNAc-6-P. Is required for the utilization of anhMurNAc either imported from the medium or derived from its own cell wall murein, and thus plays a role in cell wall recycling. The chain is Anhydro-N-acetylmuramic acid kinase from Rhodococcus erythropolis (strain PR4 / NBRC 100887).